The sequence spans 113 residues: Protein FMC1 homolog (113 aa).

The disordered stretch occupies residues 94–113 (SAGLVGLQLPHQPGGKGWEP).

It belongs to the FMC1 family. As to quaternary structure, interacts with ATPAF2.

It is found in the mitochondrion. Plays a role in the assembly/stability of the mitochondrial membrane ATP synthase (F(1)F(0) ATP synthase or Complex V). This chain is Protein FMC1 homolog, found in Rattus norvegicus (Rat).